A 265-amino-acid polypeptide reads, in one-letter code: Protein HesA, vegetative (265 aa).

It belongs to the HesA/MoeB/ThiF family.

The sequence is that of Protein HesA, vegetative (hesA2) from Trichormus variabilis (strain ATCC 29413 / PCC 7937) (Anabaena variabilis).